Consider the following 330-residue polypeptide: Ketol-acid reductoisomerase (NADP(+)) (330 aa).

The KARI N-terminal Rossmann domain maps to 1–181 (MNVYYEQDAD…GGAKAGVIET (181 aa)). Residues 24–27 (YGSQ), R47, S50, S52, and 82–85 (DQYQ) each bind NADP(+). Residue H107 is part of the active site. G133 serves as a coordination point for NADP(+). Residues 182 to 327 (TIKNETETDL…AKLRNMMSWL (146 aa)) form the KARI C-terminal knotted domain. Positions 190, 194, 226, and 230 each coordinate Mg(2+). A substrate-binding site is contributed by S251.

The protein belongs to the ketol-acid reductoisomerase family. Mg(2+) serves as cofactor.

It catalyses the reaction (2R)-2,3-dihydroxy-3-methylbutanoate + NADP(+) = (2S)-2-acetolactate + NADPH + H(+). It carries out the reaction (2R,3R)-2,3-dihydroxy-3-methylpentanoate + NADP(+) = (S)-2-ethyl-2-hydroxy-3-oxobutanoate + NADPH + H(+). It functions in the pathway amino-acid biosynthesis; L-isoleucine biosynthesis; L-isoleucine from 2-oxobutanoate: step 2/4. Its pathway is amino-acid biosynthesis; L-valine biosynthesis; L-valine from pyruvate: step 2/4. Involved in the biosynthesis of branched-chain amino acids (BCAA). Catalyzes an alkyl-migration followed by a ketol-acid reduction of (S)-2-acetolactate (S2AL) to yield (R)-2,3-dihydroxy-isovalerate. In the isomerase reaction, S2AL is rearranged via a Mg-dependent methyl migration to produce 3-hydroxy-3-methyl-2-ketobutyrate (HMKB). In the reductase reaction, this 2-ketoacid undergoes a metal-dependent reduction by NADPH to yield (R)-2,3-dihydroxy-isovalerate. In Chlorobium phaeovibrioides (strain DSM 265 / 1930) (Prosthecochloris vibrioformis (strain DSM 265)), this protein is Ketol-acid reductoisomerase (NADP(+)).